Consider the following 75-residue polypeptide: Protein TM_1420 (75 aa).

4 residues coordinate [2Fe-2S] cluster: Cys-6, Cys-11, Cys-39, and Cys-43.

The cofactor is [2Fe-2S] cluster.

Its function is as follows. Might be part of a multi-protein complex, possibly involved in metal cluster assembly. This chain is Protein TM_1420, found in Thermotoga maritima (strain ATCC 43589 / DSM 3109 / JCM 10099 / NBRC 100826 / MSB8).